The sequence spans 1070 residues: 3',5'-cyclic-AMP phosphodiesterase (1070 aa).

4 disordered regions span residues 1–91 (MSQE…KQDS), 166–215 (STSI…TRFQ), 487–516 (VPAS…LSQG), and 615–653 (SAGQ…RLPT). A compositionally biased stretch (low complexity) spans 51–69 (KQVQVQSQKFSSTSSTTKV). The segment covering 70-84 (ATHSFSMSSSAGTTG) has biased composition (polar residues). Over residues 166–210 (STSIITSSEQRTSTSTSSSSSTRYIASGSSNLAGGNSNSASSASS) the composition is skewed to low complexity. Residues 488-506 (PASNKSRRPNQSSSASRSG) are compositionally biased toward polar residues. Positions 656–985 (VETPRENELG…DYYQSMIPPS (330 aa)) constitute a PDEase domain. The Proton donor role is filled by histidine 732. A 3',5'-cyclic AMP-binding site is contributed by 732–736 (HNSLH). A divalent metal cation contacts are provided by histidine 736, histidine 772, aspartate 773, and aspartate 890. 3',5'-cyclic AMP is bound by residues aspartate 773, aspartate 890, and glutamine 941. Over residues 1007–1024 (EESDQENLAELEEGDESG) the composition is skewed to acidic residues. Residues 1007–1070 (EESDQENLAE…CQNQPQHGGM (64 aa)) form a disordered region. Residues 1025-1042 (GESTTTGTTGTTAASALS) are compositionally biased toward low complexity. Residues 1043 to 1054 (GAGGGGGGGGGM) are compositionally biased toward gly residues. Residues 1060-1070 (GCQNQPQHGGM) show a composition bias toward polar residues.

It belongs to the cyclic nucleotide phosphodiesterase family. PDE4 subfamily. As to quaternary structure, monomer. The cofactor is a divalent metal cation.

It carries out the reaction 3',5'-cyclic AMP + H2O = AMP + H(+). It participates in purine metabolism; 3',5'-cyclic AMP degradation; AMP from 3',5'-cyclic AMP: step 1/1. Hydrolyzes the second messenger cAMP, which is a key regulator of many important physiological processes. Vital for female fertility. Required for learning/memory. The sequence is that of 3',5'-cyclic-AMP phosphodiesterase (dnc) from Drosophila melanogaster (Fruit fly).